The sequence spans 422 residues: Succinate--CoA ligase [ADP-forming] subunit beta, mitochondrial (422 aa).

The N-terminal 27 residues, 1–27 (MVRGSLGKLASRALSVAGKWQHQQLRR), are a transit peptide targeting the mitochondrion. Residues 36 to 279 (AELMGKYGIN…TTQEDPREVA (244 aa)) enclose the ATP-grasp domain. ATP is bound by residues lysine 75, 82–84 (GRG), and glutamate 142. Asparagine 234 and aspartate 248 together coordinate Mg(2+). Substrate-binding positions include asparagine 299 and 356-358 (GIM).

It belongs to the succinate/malate CoA ligase beta subunit family. As to quaternary structure, heterodimer of an alpha and a beta subunit. Requires Mg(2+) as cofactor.

The protein localises to the mitochondrion. The catalysed reaction is succinate + ATP + CoA = succinyl-CoA + ADP + phosphate. The protein operates within carbohydrate metabolism; tricarboxylic acid cycle; succinate from succinyl-CoA (ligase route): step 1/1. Its function is as follows. Succinyl-CoA synthetase functions in the citric acid cycle (TCA), coupling the hydrolysis of succinyl-CoA to the synthesis of ATP and thus represents the only step of substrate-level phosphorylation in the TCA. The beta subunit provides nucleotide specificity of the enzyme and binds the substrate succinate, while the binding sites for coenzyme A and phosphate are found in the alpha subunit. This chain is Succinate--CoA ligase [ADP-forming] subunit beta, mitochondrial, found in Oryza sativa subsp. japonica (Rice).